The primary structure comprises 418 residues: (+)-T-muurolol synthase ((2E,6E)-farnesyl diphosphate cyclizing) (418 aa).

The Mg(2+) site is built by Asp83 and Asp88. A DDXXXD motif motif is present at residues 83-88 (DDEYCD). Residue Arg179 participates in substrate binding. Asn225 and Ser229 together coordinate Mg(2+). Lys232 lines the substrate pocket. Glu233 contributes to the Mg(2+) binding site. Residue 312-313 (RY) participates in substrate binding. The interval 354 to 418 (LPEPGSDGAD…QQSTWRREHR (65 aa)) is disordered. Positions 402–412 (ASRSSGLQQST) are enriched in polar residues.

Belongs to the terpene synthase family. Mg(2+) is required as a cofactor.

The enzyme catalyses (2E,6E)-farnesyl diphosphate + H2O = (+)-T-muurolol + diphosphate. It participates in secondary metabolite biosynthesis; terpenoid biosynthesis. Catalyzes the conversion of (2E,6E)-farnesyl diphosphate (FPP) into (+)-T-muurolol via a 1,10-cyclization, which requires isomerization of FPP to nerolidyl diphosphate (NPP) and then abstraction of the pyrophosphate from intermediate NPP leading to a (E,Z)-germacradienyl (helminthogermacradienyl) cation. This is (+)-T-muurolol synthase ((2E,6E)-farnesyl diphosphate cyclizing) from Streptomyces clavuligerus.